The sequence spans 117 residues: Large ribosomal subunit protein eL34 (117 aa).

The protein belongs to the eukaryotic ribosomal protein eL34 family. In terms of assembly, component of the large ribosomal subunit.

It is found in the cytoplasm. The protein resides in the cytosol. The protein localises to the endoplasmic reticulum. Its function is as follows. Component of the large ribosomal subunit. The ribosome is a large ribonucleoprotein complex responsible for the synthesis of proteins in the cell. This is Large ribosomal subunit protein eL34 (rpl34) from Danio rerio (Zebrafish).